The primary structure comprises 378 residues: Flagellar P-ring protein 2 (378 aa).

The first 33 residues, 1–33 (MHEVSDKTNAIHPLQRVSRALFALGLLCFAAMA), serve as a signal peptide directing secretion.

Belongs to the FlgI family. The basal body constitutes a major portion of the flagellar organelle and consists of four rings (L,P,S, and M) mounted on a central rod.

It localises to the periplasm. The protein localises to the bacterial flagellum basal body. In terms of biological role, assembles around the rod to form the L-ring and probably protects the motor/basal body from shearing forces during rotation. This chain is Flagellar P-ring protein 2, found in Hahella chejuensis (strain KCTC 2396).